Consider the following 457-residue polypeptide: Phosphomethylpyrimidine synthase (457 aa).

Substrate-binding positions include Asn-88, Met-117, Tyr-146, His-182, 204–206 (SRG), 245–248 (DACR), and Glu-284. Residue His-288 participates in Zn(2+) binding. Tyr-311 lines the substrate pocket. A Zn(2+)-binding site is contributed by His-352. Residues Cys-428, Cys-431, and Cys-435 each contribute to the [4Fe-4S] cluster site.

It belongs to the ThiC family. It depends on [4Fe-4S] cluster as a cofactor.

The catalysed reaction is 5-amino-1-(5-phospho-beta-D-ribosyl)imidazole + S-adenosyl-L-methionine = 4-amino-2-methyl-5-(phosphooxymethyl)pyrimidine + CO + 5'-deoxyadenosine + formate + L-methionine + 3 H(+). Its pathway is cofactor biosynthesis; thiamine diphosphate biosynthesis. In terms of biological role, catalyzes the synthesis of the hydroxymethylpyrimidine phosphate (HMP-P) moiety of thiamine from aminoimidazole ribotide (AIR) in a radical S-adenosyl-L-methionine (SAM)-dependent reaction. This chain is Phosphomethylpyrimidine synthase, found in Clostridium tetani (strain Massachusetts / E88).